Consider the following 309-residue polypeptide: MVSVLHSISTIIIIAEFVWGNLSNGLIVLKNCLDWINIKELSTLDQILILLAISRISLIWETLLMWVKDKLISSITIEELKMIMFSFMLSSHFSLWLATALSTFYLFRIANCSWQIFLYLKWRLKHLIVQMLLGSVMFLIANIIQITITLEKRFYQYKGNTSVNSIQNEFALLIEMMLFNMTIFSVIPFLLALISFFLLIFSLWKHLQRMQLNSREDRDPSTKAHRNALGIMVSFLLLYTMYVLSLLISWIAQKNQSELVHIICMITSLLNPSVHSSILILGNFKLKQSSLCILRHLGCRLKSQNTPTT.

Over 1 to 7 (MVSVLHS) the chain is Extracellular. Residues 8-28 (ISTIIIIAEFVWGNLSNGLIV) form a helical membrane-spanning segment. Residues 29 to 46 (LKNCLDWINIKELSTLDQ) lie on the Cytoplasmic side of the membrane. The helical transmembrane segment at 47-67 (ILILLAISRISLIWETLLMWV) threads the bilayer. Over 68-81 (KDKLISSITIEELK) the chain is Extracellular. A helical transmembrane segment spans residues 82–102 (MIMFSFMLSSHFSLWLATALS). Over 103-127 (TFYLFRIANCSWQIFLYLKWRLKHL) the chain is Cytoplasmic. A helical membrane pass occupies residues 128-148 (IVQMLLGSVMFLIANIIQITI). Residues 149 to 182 (TLEKRFYQYKGNTSVNSIQNEFALLIEMMLFNMT) lie on the Extracellular side of the membrane. Residues N160 and N180 are each glycosylated (N-linked (GlcNAc...) asparagine). A helical transmembrane segment spans residues 183 to 203 (IFSVIPFLLALISFFLLIFSL). The Cytoplasmic portion of the chain corresponds to 204 to 227 (WKHLQRMQLNSREDRDPSTKAHRN). A helical transmembrane segment spans residues 228–248 (ALGIMVSFLLLYTMYVLSLLI). Residues 249–261 (SWIAQKNQSELVH) lie on the Extracellular side of the membrane. An N-linked (GlcNAc...) asparagine glycan is attached at N255. A helical membrane pass occupies residues 262-282 (IICMITSLLNPSVHSSILILG). Over 283–309 (NFKLKQSSLCILRHLGCRLKSQNTPTT) the chain is Cytoplasmic.

This sequence belongs to the G-protein coupled receptor T2R family.

The protein localises to the membrane. In terms of biological role, putative taste receptor which may play a role in the perception of bitterness. This Rattus norvegicus (Rat) protein is Taste receptor type 2 member 124.